Reading from the N-terminus, the 412-residue chain is 43 kDa receptor-associated protein of the synapse (412 aa).

Gly-2 carries N-myristoyl glycine lipidation. 7 TPR repeats span residues 6–39, 83–116, 123–156, 163–196, 206–239, 246–279, and 286–319; these read TKQQ…SSDL, LESY…PGTR, GQVS…AHNN, CRVC…VNNY, AMSQ…ALQH, ALCL…MTEI, and VQAL…AEEV. Tyr-196 is modified (phosphotyrosine). Residues 363 to 403 form an RING-type zinc finger; it reads CGLCGESIGEKNSRLQALPCSHIFHLRCLQNNGTRSCPNCR. Phosphoserine is present on Ser-405.

This sequence belongs to the RAPsyn family. Post-translationally, ubiquitinated by the BCR(KLHL8) complex, leading to its degradation.

It localises to the cell membrane. The protein resides in the postsynaptic cell membrane. Its subcellular location is the cytoplasm. The protein localises to the cytoskeleton. Postsynaptic protein required for clustering of nicotinic acetylcholine receptors (nAChRs) at the neuromuscular junction. It may link the receptor to the underlying postsynaptic cytoskeleton, possibly by direct association with actin or spectrin. The chain is 43 kDa receptor-associated protein of the synapse (RAPSN) from Homo sapiens (Human).